The sequence spans 194 residues: Adenylate kinase (194 aa).

Residue 8-16 (GIPGVGKST) coordinates ATP.

This sequence belongs to the archaeal adenylate kinase family. As to quaternary structure, homotrimer.

The protein localises to the cytoplasm. It carries out the reaction AMP + ATP = 2 ADP. The chain is Adenylate kinase (adkA) from Sulfolobus acidocaldarius (strain ATCC 33909 / DSM 639 / JCM 8929 / NBRC 15157 / NCIMB 11770).